Reading from the N-terminus, the 84-residue chain is Putative regulatory protein Dde_2720 (84 aa).

The protein belongs to the RemA family.

This is Putative regulatory protein Dde_2720 from Oleidesulfovibrio alaskensis (strain ATCC BAA-1058 / DSM 17464 / G20) (Desulfovibrio alaskensis).